The sequence spans 133 residues: Hydrogenase maturation factor HypA (133 aa).

His-2 is a binding site for Ni(2+). Residues Cys-73, Cys-75, Cys-105, and Cys-108 each coordinate Zn(2+).

Belongs to the HypA/HybF family.

Its function is as follows. Involved in the maturation of [NiFe] hydrogenases. Required for nickel insertion into the metal center of the hydrogenase. The protein is Hydrogenase maturation factor HypA of Methanosarcina barkeri (strain Fusaro / DSM 804).